The chain runs to 342 residues: N-acetyl-gamma-glutamyl-phosphate reductase (342 aa).

Residue Cys-147 is part of the active site.

This sequence belongs to the NAGSA dehydrogenase family. Type 1 subfamily.

The protein resides in the cytoplasm. The catalysed reaction is N-acetyl-L-glutamate 5-semialdehyde + phosphate + NADP(+) = N-acetyl-L-glutamyl 5-phosphate + NADPH + H(+). It participates in amino-acid biosynthesis; L-arginine biosynthesis; N(2)-acetyl-L-ornithine from L-glutamate: step 3/4. Functionally, catalyzes the NADPH-dependent reduction of N-acetyl-5-glutamyl phosphate to yield N-acetyl-L-glutamate 5-semialdehyde. The polypeptide is N-acetyl-gamma-glutamyl-phosphate reductase (Campylobacter jejuni subsp. jejuni serotype O:2 (strain ATCC 700819 / NCTC 11168)).